The primary structure comprises 403 residues: E2F transcription factor-like E2FE (403 aa).

A DNA-binding region spans residues 34 to 99; sequence RKQKSLGLLC…RAKNQYTWKG (66 aa). The tract at residues 128 to 167 is disordered; that stretch reads VKGSDDEDDDEESSQPHSSSQTDSSKPGSLPQSSDPSKID. Low complexity predominate over residues 142–152; sequence QPHSSSQTDSS. Over residues 153–163 the composition is skewed to polar residues; it reads KPGSLPQSSDP. Residues 169-250 mediate DNA binding; sequence RREKSLGLLT…SRKPAFKWLG (82 aa). Residues 282–319 are disordered; sequence VKRSKSSSSSQENATERRLKMKKHSTPESSYNKSFDVH.

This sequence belongs to the E2F/DP family. In terms of tissue distribution, expressed exclusively in mitotically dividing cells. Highly expressed in young leaves and mature flowers. Lower expression in young stalk and in young and mature flowers.

The protein localises to the nucleus. Inhibitor of E2F-dependent activation of gene expression. Binds specifically the E2 recognition site without interacting with DP proteins and prevents transcription activation by E2F/DP heterodimers. Controls the timing of endocycle onset and inhibits endoreduplication. The protein is E2F transcription factor-like E2FE (E2FE) of Arabidopsis thaliana (Mouse-ear cress).